Consider the following 152-residue polypeptide: Cytosolic calcium-binding protein 1 (152 aa).

7 consecutive repeat copies span residues 57–62, 67–71, 78–82, 104–108, 112–116, 124–129, and 131–136. Positions 57–136 are 7 X 5 AA approximate repeats of V-E-E-K-K; the sequence is VEETEKPIEE…EKKPEAEEEK (80 aa). Positions 60 to 152 are disordered; it reads TEKPIEETEE…VTAPVEKADE (93 aa). A compositionally biased stretch (basic and acidic residues) spans 96–138; sequence DESKTEEVVEAKKEEEVEEKKTEEAPVVVEEEKKPEAEEEKPA.

In terms of tissue distribution, predominantly expressed in petioles (at protein level). Mainly observed in shoots, flowers, siliques and roots, and, to a lower extent, in stems and leaves.

The protein localises to the cytoplasm. The protein resides in the cytosol. In terms of biological role, binds calcium Ca(2+) and may act as a signal mediator to buffer Ca(2+). This is Cytosolic calcium-binding protein 1 from Arabidopsis thaliana (Mouse-ear cress).